The primary structure comprises 535 residues: Cytochrome c oxidase subunit 1 (535 aa).

A helical membrane pass occupies residues 17–37; that stretch reads ILYFIFAIFSGVIGSTMSLII. Ca(2+)-binding residues include Glu40, Ala43, and Gly45. A run of 6 helical transmembrane segments spans residues 58-78, 104-124, 147-167, 184-204, 236-256, and 268-288; these read VLVV…GLVG, FWLL…ESWA, LGIF…INFI, PLFV…LPVL, LFWF…FGII, and VFGE…GFLV. His63 is a binding site for Fe(II)-heme a. Residue His242 coordinates Cu cation. A cross-link (1'-histidyl-3'-tyrosine (His-Tyr)) is located at residues 242–246; that stretch reads HPEVY. O2 is bound at residue Tyr246. His291 and His292 together coordinate Cu cation. 2 helical membrane passes run 311–331 and 339–359; these read MVIA…LYGG and MLYA…GVAL. Residues His369 and Asp370 each coordinate Mg(2+). 2 helical membrane passes run 373-393 and 413-433; these read YVVG…LFAG and IQFW…HFLG. His377 lines the heme a3 pocket. His379 lines the Fe(II)-heme a pocket. Pro442 contacts Ca(2+). Residues 453 to 473 traverse the membrane as a helical segment; that stretch reads YVSSIGSVIAIISLALFIYII.

The protein belongs to the heme-copper respiratory oxidase family. Component of the cytochrome c oxidase (complex IV, CIV), a multisubunit enzyme composed of a catalytic core of 3 subunits and several supernumerary subunits. The complex exists as a monomer or a dimer and forms supercomplexes (SCs) in the inner mitochondrial membrane with ubiquinol-cytochrome c oxidoreductase (cytochrome b-c1 complex, complex III, CIII). The cofactor is heme. Cu cation is required as a cofactor.

Its subcellular location is the mitochondrion inner membrane. The catalysed reaction is 4 Fe(II)-[cytochrome c] + O2 + 8 H(+)(in) = 4 Fe(III)-[cytochrome c] + 2 H2O + 4 H(+)(out). Its pathway is energy metabolism; oxidative phosphorylation. Component of the cytochrome c oxidase, the last enzyme in the mitochondrial electron transport chain which drives oxidative phosphorylation. The respiratory chain contains 3 multisubunit complexes succinate dehydrogenase (complex II, CII), ubiquinol-cytochrome c oxidoreductase (cytochrome b-c1 complex, complex III, CIII) and cytochrome c oxidase (complex IV, CIV), that cooperate to transfer electrons derived from NADH and succinate to molecular oxygen, creating an electrochemical gradient over the inner membrane that drives transmembrane transport and the ATP synthase. Cytochrome c oxidase is the component of the respiratory chain that catalyzes the reduction of oxygen to water. Electrons originating from reduced cytochrome c in the intermembrane space (IMS) are transferred via the dinuclear copper A center (CU(A)) of subunit 2 and heme A of subunit 1 to the active site in subunit 1, a binuclear center (BNC) formed by heme A3 and copper B (CU(B)). The BNC reduces molecular oxygen to 2 water molecules using 4 electrons from cytochrome c in the IMS and 4 protons from the mitochondrial matrix. The polypeptide is Cytochrome c oxidase subunit 1 (COX1) (Wickerhamomyces canadensis (Yeast)).